The primary structure comprises 425 residues: MNLTLLLLALIFSPSLIFSLPTANKVKLVKKGLNWDYQNAKIHGVNLGGWFVLEPFITPSLFDIYSKPNDDSQVPVDEYHFTQKLGKDAAQQVLEQHWKTWYKENDFKMMLKYGLNAVRIPIGYWAFKLLDYDPYVQGQVKYLDRALDWARKYNLKVWIDLHGAPGSQNGFDNSGLRDSLGFQQGNNVNFTLEVLEIIGKKYGGPEYEDVVIGIELLNEPLGPSLDLNYLKEFFQQGYQNLRNSGSVQAVIIQDAFQPMGYWDNFLTLDQYWNVVVDHHHYQVFSAGELQRSIDDHITVACNWGWDAKKEYHWNVAGEWSAALTDCARWLNGVGRGARFSGDFDNSPYFGSCDCYVNIATWPSEYRTNVRRYIEAQLDAFEQTGGWFFWNWKCENAIEWDLQGLITAGVFPYPFYNRQFPNQCGF.

Residues 1–19 (MNLTLLLLALIFSPSLIFS) form the signal peptide. The Proton donor role is filled by Glu-219. 2 disulfides stabilise this stretch: Cys-301/Cys-423 and Cys-326/Cys-352. The Nucleophile role is filled by Glu-318.

This sequence belongs to the glycosyl hydrolase 5 (cellulase A) family.

The protein localises to the secreted. It carries out the reaction Successive hydrolysis of beta-D-glucose units from the non-reducing ends of (1-&gt;3)-beta-D-glucans, releasing alpha-glucose.. Its function is as follows. Beta-glucanases participate in the metabolism of beta-glucan, the main structural component of the cell wall. It could also function biosynthetically as a transglycosylase. This is Glucan 1,3-beta-glucosidase from Schwanniomyces occidentalis (Yeast).